We begin with the raw amino-acid sequence, 371 residues long: 4-hydroxy-3-methylbut-2-en-1-yl diphosphate synthase (flavodoxin) (371 aa).

Cys-268, Cys-271, Cys-303, and Glu-310 together coordinate [4Fe-4S] cluster.

The protein belongs to the IspG family. [4Fe-4S] cluster is required as a cofactor.

It carries out the reaction (2E)-4-hydroxy-3-methylbut-2-enyl diphosphate + oxidized [flavodoxin] + H2O + 2 H(+) = 2-C-methyl-D-erythritol 2,4-cyclic diphosphate + reduced [flavodoxin]. It functions in the pathway isoprenoid biosynthesis; isopentenyl diphosphate biosynthesis via DXP pathway; isopentenyl diphosphate from 1-deoxy-D-xylulose 5-phosphate: step 5/6. Converts 2C-methyl-D-erythritol 2,4-cyclodiphosphate (ME-2,4cPP) into 1-hydroxy-2-methyl-2-(E)-butenyl 4-diphosphate. This is 4-hydroxy-3-methylbut-2-en-1-yl diphosphate synthase (flavodoxin) from Macrococcus caseolyticus (strain JCSC5402) (Macrococcoides caseolyticum).